A 231-amino-acid polypeptide reads, in one-letter code: Putative carboxymethylenebutenolidase (231 aa).

Active-site residues include cysteine 118, aspartate 167, and histidine 199.

Belongs to the dienelactone hydrolase family.

It catalyses the reaction 2-(5-oxo-2,5-dihydrofuran-2-ylidene)acetate + H2O = 4-oxohex-2-enedioate + H(+). The polypeptide is Putative carboxymethylenebutenolidase (Aquifex aeolicus (strain VF5)).